Reading from the N-terminus, the 347-residue chain is Phenylalanine--tRNA ligase alpha subunit (347 aa).

Mg(2+) is bound at residue Glu261.

This sequence belongs to the class-II aminoacyl-tRNA synthetase family. Phe-tRNA synthetase alpha subunit type 1 subfamily. As to quaternary structure, tetramer of two alpha and two beta subunits. Requires Mg(2+) as cofactor.

The protein localises to the cytoplasm. It catalyses the reaction tRNA(Phe) + L-phenylalanine + ATP = L-phenylalanyl-tRNA(Phe) + AMP + diphosphate + H(+). The sequence is that of Phenylalanine--tRNA ligase alpha subunit from Streptococcus equi subsp. zooepidemicus (strain MGCS10565).